A 581-amino-acid chain; its full sequence is MDSKAVSPLIGFVLMLAIIMGLIGIMQAQWVPVWNKEVEAEHLSKLEFEASEIPKIMFISATTGKQGVASIDAGCEYPNRGFLINPSTASTSLKAIPLSVDVKFNETLPNGSLFRYSNKFTTYAIIVQPNYFYMQKPEIIVEHSAVIKTSGNSALNVSSPVSFSRNKVHLFIVNSTFSSISTPNTLNLQFIPVSYGGDTFVKNASITLKVLDETFDWWNKTLKNIFGAGNVTADGSRKEMTFRLFNTTLSMSYLIVQASIGERAKLNERIEPYRIFATSSNTLSMLKGEQRELNVKVLDIYNNPVRGYSRVSYSVVSGGDKCRIVSASPQTDEKGVFTVTVEAVNSGNCDVEFRIDSINSGFNKTKFSITVIPVSSGGLGGQGYLSFTPASRGLVEIYHGPVNGFIDPTKPPAESPRDLITDPNWEPYALEDKELAAYNDGSWDWWSGEYVPTSGYLEKTQNNAQSKQNSQKNHASQLFEFNVGDVQMSSLKVFWNGIAWLDVQNNRNDGVVLYVWNGTGWEYLCDTTSSSEVWLQCEKRGNYIQNKKVYLLIVQNDWTQTWKGNRDSQIYTDYIELDILT.

The first 28 residues, 1 to 28 (MDSKAVSPLIGFVLMLAIIMGLIGIMQA), serve as a signal peptide directing secretion.

This is an uncharacterized protein from Archaeoglobus fulgidus (strain ATCC 49558 / DSM 4304 / JCM 9628 / NBRC 100126 / VC-16).